Here is an 864-residue protein sequence, read N- to C-terminus: Leucine--tRNA ligase (864 aa).

Positions 42–52 match the 'HIGH' region motif; sequence PYPSGKLHMGH. A 'KMSKS' region motif is present at residues 624-628; sequence KMSKS. Lys627 contributes to the ATP binding site.

Belongs to the class-I aminoacyl-tRNA synthetase family.

It is found in the cytoplasm. It catalyses the reaction tRNA(Leu) + L-leucine + ATP = L-leucyl-tRNA(Leu) + AMP + diphosphate. In Burkholderia cenocepacia (strain HI2424), this protein is Leucine--tRNA ligase.